A 653-amino-acid polypeptide reads, in one-letter code: Choline transporter-like protein 3 (653 aa).

A helical membrane pass occupies residues 34–54 (WLFLFFLFWTGLVFIMGYSVV). 2 N-linked (GlcNAc...) asparagine glycosylation sites follow: Asn-136 and Asn-151. Helical transmembrane passes span 213 to 233 (DTILGLCILALALSLAMMFTF), 243 to 263 (IFISLVILGLLFVCGVLWWLY), 284 to 304 (VLGFAIVSTGITAVLLVLIFV), 334 to 354 (LWTFAILIFFWVLWVAVLLSL), and 384 to 404 (LIGLIWTSEFILACQQMTIAG). Residues Asn-412, Asn-503, and Asn-521 are each glycosylated (N-linked (GlcNAc...) asparagine). 2 helical membrane-spanning segments follow: residues 534–554 (FIIFLGKVLVVCFTVFGGLMA) and 563–583 (VWAVPLLLVAFFAYLVAHSFL). A disordered region spans residues 632 to 653 (RAQQDKHSLRNEEGTELQAIVR). The span at 634 to 644 (QQDKHSLRNEE) shows a compositional bias: basic and acidic residues.

This sequence belongs to the CTL (choline transporter-like) family.

It is found in the membrane. This Homo sapiens (Human) protein is Choline transporter-like protein 3 (SLC44A3).